The primary structure comprises 887 residues: Integrator complex subunit 6 (887 aa).

In terms of domain architecture, VWFA spans 3 to 227 (ILLFLIDTSA…QCLESLVQKV (225 aa)). An Inhibitory loop motif is present at residues 626 to 633 (MMIDEADE). Position 804 is a phosphoserine (Ser804).

This sequence belongs to the Integrator subunit 6 family. In terms of assembly, component of the Integrator complex, composed of core subunits INTS1, INTS2, INTS3, INTS4, INTS5, INTS6, INTS7, INTS8, INTS9/RC74, INTS10, INTS11/CPSF3L, INTS12, INTS13, INTS14 and INTS15. The core complex associates with protein phosphatase 2A subunits PPP2CA and PPP2R1A, to form the Integrator-PP2A (INTAC) complex. Widely expressed. Expressed in heart, brain, placenta, lung, liver, skeletal muscle, kidney and pancreas.

The protein localises to the nucleus. Its subcellular location is the chromosome. In terms of biological role, component of the integrator complex, a multiprotein complex that terminates RNA polymerase II (Pol II) transcription in the promoter-proximal region of genes. The integrator complex provides a quality checkpoint during transcription elongation by driving premature transcription termination of transcripts that are unfavorably configured for transcriptional elongation: the complex terminates transcription by (1) catalyzing dephosphorylation of the C-terminal domain (CTD) of Pol II subunit POLR2A and SUPT5H/SPT5, (2) degrading the exiting nascent RNA transcript via endonuclease activity and (3) promoting the release of Pol II from bound DNA. The integrator complex is also involved in terminating the synthesis of non-coding Pol II transcripts, such as enhancer RNAs (eRNAs), small nuclear RNAs (snRNAs), telomerase RNAs and long non-coding RNAs (lncRNAs). Within the integrator complex, INTS6 acts as a molecular adapter that promotes assembly of protein phosphatase 2A (PP2A) subunits to the integrator core complex, promoting recruitment of PP2A to transcription pause-release checkpoint. Mediates recruitment of cytoplasmic dynein to the nuclear envelope, probably as component of the integrator complex. May have a tumor suppressor role; an ectopic expression suppressing tumor cell growth. The chain is Integrator complex subunit 6 from Homo sapiens (Human).